An 86-amino-acid polypeptide reads, in one-letter code: Large ribosomal subunit protein bL27 (86 aa).

Over residues 1-10 (MAQKKGGGST) the composition is skewed to gly residues. Positions 1 to 20 (MAQKKGGGSTRNGRDSESKR) are disordered.

Belongs to the bacterial ribosomal protein bL27 family.

The sequence is that of Large ribosomal subunit protein bL27 from Bordetella parapertussis (strain 12822 / ATCC BAA-587 / NCTC 13253).